A 278-amino-acid polypeptide reads, in one-letter code: MFSALGKWVRGSRNDKDFVTKYTADLSQITSQIHQLDVALKKSQSILSQWQSNLTFYGIALTVLALSYTYWEYHGYRPYLVVTALLCIGSLILFKWALTKLYAFYNNNRLRKLAKLRAIHQKKLEKLKEETHYNATSSIIQRFSSGEDQNDDAMVLLDDELNAKYQELNNLKTELEKFKKESHVKGLKKEDSDAWFDKIISVLAGGNELDSTSSLSPFKKIICPQCHWKSNCYRLASKPIIFICPHCNHKIDEVKEREDAIEAKQPAQPSQSEKEKTK.

Residues 1-45 (MFSALGKWVRGSRNDKDFVTKYTADLSQITSQIHQLDVALKKSQS) lie on the Cytoplasmic side of the membrane. A helical membrane pass occupies residues 46–66 (ILSQWQSNLTFYGIALTVLAL). Over 67–77 (SYTYWEYHGYR) the chain is Lumenal. A helical membrane pass occupies residues 78–98 (PYLVVTALLCIGSLILFKWAL). Topologically, residues 99 to 278 (TKLYAFYNNN…PSQSEKEKTK (180 aa)) are cytoplasmic. Residues 107-183 (NNRLRKLAKL…ELEKFKKESH (77 aa)) adopt a coiled-coil conformation. The C4-type; plays a role in ER morphology zinc-finger motif lies at 223–247 (CPQCHWKSNCYRLASKPIIFICPHC). Residues 258–278 (EDAIEAKQPAQPSQSEKEKTK) are disordered.

It belongs to the lunapark family. Interacts with RTN1; this interaction is negatively regulated by SEY1. Interacts with SEY1 and YOP1.

The protein localises to the endoplasmic reticulum membrane. In terms of biological role, plays a role in tubular endoplasmic reticulum network formation and maintenance. Works in conjunction with the ER shaping proteins (reticulons RTN1 and RTN2, YOP1), and in antagonism to SEY1 to maintain the network in a dynamic equilibrium. May counterbalance SEY1-directed polygon formation by promoting polygon loss through ring closure. This chain is Endoplasmic reticulum junction formation protein lunapark (LNP1), found in Saccharomyces cerevisiae (strain ATCC 204508 / S288c) (Baker's yeast).